A 1170-amino-acid polypeptide reads, in one-letter code: Thrombospondin-1 (1170 aa).

An N-terminal signal peptide occupies residues 1–18; that stretch reads MGLAWGLGVLLLLHACGS. Positions 47-95 are heparin-binding; it reads RLVKGPDPSSPAFRIEDANLIPPVPDKKFQDLVDAVRAEKGFLLLASLR. Residues 65 to 270 form the Laminin G-like domain; sequence NLIPPVPDKK…HKTKDLQAIC (206 aa). A disulfide bridge connects residues cysteine 171 and cysteine 232. Residues asparagine 248 and asparagine 360 are each glycosylated (N-linked (GlcNAc...) asparagine). Positions 316 to 373 constitute a VWFC domain; that stretch reads PLCYHNGVQYRTGDEWTVDSCTECRCQNSVTICKKVSCPIMPCSNATVPDGECCPRCW. TSP type-1 domains follow at residues 379 to 429, 435 to 490, and 492 to 547; these read DDGW…QECD, DGGW…DSCP, and NGGW…QDCP. Intrachain disulfides connect cysteine 391/cysteine 423, cysteine 395/cysteine 428, cysteine 406/cysteine 413, cysteine 447/cysteine 484, cysteine 451/cysteine 489, cysteine 462/cysteine 474, cysteine 504/cysteine 541, cysteine 508/cysteine 546, cysteine 519/cysteine 531, cysteine 551/cysteine 562, cysteine 556/cysteine 572, cysteine 575/cysteine 586, cysteine 592/cysteine 608, cysteine 599/cysteine 617, cysteine 620/cysteine 644, cysteine 650/cysteine 663, cysteine 657/cysteine 676, cysteine 678/cysteine 689, cysteine 705/cysteine 713, cysteine 718/cysteine 738, cysteine 754/cysteine 774, cysteine 777/cysteine 797, cysteine 813/cysteine 833, cysteine 836/cysteine 856, cysteine 874/cysteine 894, cysteine 910/cysteine 930, and cysteine 946/cysteine 1167. Residues 547–587 enclose the EGF-like 1 domain; sequence PIDGCLSNPCFAGVQCTSYPDGSWKCGACPPGYSGDGVECK. Serine 553 is a glycosylation site (O-linked (Xyl) serine). One can recognise an EGF-like 2 domain in the interval 646 to 690; it reads PRNPCTDGTHDCNKNAKCNYLGHYSDPMYRCECKPGYAGNGIICG. TSP type-3 repeat units lie at residues 691-726, 727-762, 763-785, 786-821, 822-844, 845-882, 883-918, and 919-954; these read EDTDLDGWPNEDLLCVANATYHCRKDNCPNLPNSGQ, EDYDKDGIGDACDDDDDNDKIPDDRDNCPFHYNPAQ, YDYDRDDVGDRCDNCPYNHNPDQ, ADTDNNGEGDACAADIDGDSILNERDNCQYVYNVDQ, KDTDMDGVGDQCDNCPLEHNPDQ, LDSDSDRIGDTCDNNQDIDEDGHQNNLDNCPYVPNANQ, ADHDKDGKGDACDHDDDNDGIPDDRDNCRLVPNPDQ, and KDSDGDGRGDACKDDFDQDKVPDIDDICPENVDISE. The N-linked (GlcNAc...) asparagine glycan is linked to asparagine 708. Residues 839 to 944 are disordered; that stretch reads EHNPDQLDSD…DQDKVPDIDD (106 aa). Composition is skewed to basic and acidic residues over residues 840–854, 883–894, and 917–941; these read HNPDQLDSDSDRIGD, ADHDKDGKGDAC, and DQKDSDGDGRGDACKDDFDQDKVPD. The Cell attachment site signature appears at 926-928; the sequence is RGD. Residues 958–1170 form the TSP C-terminal domain; sequence RRFQMIPLDP…SDLKYECRDS (213 aa). Asparagine 1067 and asparagine 1085 each carry an N-linked (GlcNAc...) asparagine glycan.

Belongs to the thrombospondin family. Homotrimer; disulfide-linked. Can bind to fibrinogen, fibronectin, laminin, type V collagen and integrins alpha-V/beta-1, alpha-V/beta-3 and alpha-IIb/beta-3. Binds heparin. Interacts (via the C-terminal domain) with CD47. Interacts (via the TSP type I repeats) with CD36; the interaction conveys an antiangiogenic effect. Interacts (via the TSP type I repeats) with HRG; the interaction blocks the antiangiogenic effect of THBS1 with CD36. Interacts with ATF6 (via lumenal domain). Interacts with FN1; this interaction is enhanced by TNFAIP6, which may act as a bridging molecule between FN1 and THBS1. Interacts with SIRPA; the interaction stimulates phosphorylation of SIRPA. As to expression, odontoblasts.

It localises to the secreted. The protein resides in the cell surface. The protein localises to the extracellular space. It is found in the extracellular matrix. Its subcellular location is the endoplasmic reticulum. It localises to the sarcoplasmic reticulum. In terms of biological role, adhesive glycoprotein that mediates cell-to-cell and cell-to-matrix interactions. Multifunctional, involved in inflammation, angiogenesis, wound healing, reactive oxygen species (ROS) signaling, nitrous oxide (NO) signaling, apoptosis, senescence, aging, cellular self-renewal, stemness, and cardiovascular and metabolic homeostasis. Negatively modulates dendritic cell activation and cytokine release, as part of an autocrine feedback loop, contributing to the resolution of inflammation and immune homeostasis. Ligand for receptor CD47. Modulates nitrous oxide (NO) signaling via CD47, hence playing a role as a pressor agent, supporting blood pressure. Plays a role in endothelial cell senescence, acting via CD47, by increasing the abundance and activation of NADPH oxidase NOX1, and so generating excess ROS. Inhibits stem cell self-renewal, acting via CD47 signaling, probably by regulation of the stem cell transcription factors POU5F1/OCT4, SOX2, MYC/c-Myc and KLF4. Negatively modulates wound healing, acting via CD47. Ligand for receptor CD36. Involved in inducing apoptosis in podocytes in response to elevated free fatty acids, acting via CD36. Plays a role in suppressing angiogenesis, acting, depending on context, via CD36 or CD47. Promotes cellular senescence in a TP53-CDKN1A-RB1 signaling-dependent manner. Ligand for immunoglobulin-like cell surface receptor SIRPA. Involved in ROS signaling in non-phagocytic cells, stimulating NADPH oxidase-derived ROS production, acting via interaction with SIRPA. Plays a role in metabolic dysfunction in diet-induced obesity, perhaps acting by exacerbating adipose inflammatory activity; its effects may be mediated, at least in part, through enhanced adipocyte proliferation. Plays a role in ER stress response, via its interaction with the activating transcription factor 6 alpha (ATF6) which produces adaptive ER stress response factors. May be involved in age-related conditions, including metabolic dysregulation, during normal aging. This chain is Thrombospondin-1 (THBS1), found in Bos taurus (Bovine).